A 307-amino-acid chain; its full sequence is Ribosomal RNA small subunit methyltransferase H (307 aa).

Residues 34–36 (GGH), Asp-54, Phe-79, Asp-101, and Gln-108 contribute to the S-adenosyl-L-methionine site.

The protein belongs to the methyltransferase superfamily. RsmH family.

It is found in the cytoplasm. It carries out the reaction cytidine(1402) in 16S rRNA + S-adenosyl-L-methionine = N(4)-methylcytidine(1402) in 16S rRNA + S-adenosyl-L-homocysteine + H(+). Functionally, specifically methylates the N4 position of cytidine in position 1402 (C1402) of 16S rRNA. The protein is Ribosomal RNA small subunit methyltransferase H of Vesicomyosocius okutanii subsp. Calyptogena okutanii (strain HA).